A 350-amino-acid polypeptide reads, in one-letter code: Biotin synthase (350 aa).

Residues 38–256 enclose the Radical SAM core domain; the sequence is NYVQVSTLLS…IAVARIMMPE (219 aa). Residues C53, C57, and C60 each coordinate [4Fe-4S] cluster. [2Fe-2S] cluster contacts are provided by C97, C128, C188, and R260.

The protein belongs to the radical SAM superfamily. Biotin synthase family. Homodimer. Requires [4Fe-4S] cluster as cofactor. [2Fe-2S] cluster is required as a cofactor.

The catalysed reaction is (4R,5S)-dethiobiotin + (sulfur carrier)-SH + 2 reduced [2Fe-2S]-[ferredoxin] + 2 S-adenosyl-L-methionine = (sulfur carrier)-H + biotin + 2 5'-deoxyadenosine + 2 L-methionine + 2 oxidized [2Fe-2S]-[ferredoxin]. Its pathway is cofactor biosynthesis; biotin biosynthesis; biotin from 7,8-diaminononanoate: step 2/2. Catalyzes the conversion of dethiobiotin (DTB) to biotin by the insertion of a sulfur atom into dethiobiotin via a radical-based mechanism. This chain is Biotin synthase, found in Aliivibrio salmonicida (strain LFI1238) (Vibrio salmonicida (strain LFI1238)).